Reading from the N-terminus, the 209-residue chain is Thymidine kinase (209 aa).

ATP contacts are provided by residues 9–16 (AAMNAGKS) and 88–91 (DEAQ). E89 serves as the catalytic Proton acceptor. C146, C148, C183, and H186 together coordinate Zn(2+).

The protein belongs to the thymidine kinase family. As to quaternary structure, homotetramer.

It is found in the cytoplasm. It carries out the reaction thymidine + ATP = dTMP + ADP + H(+). The sequence is that of Thymidine kinase from Legionella pneumophila (strain Paris).